Reading from the N-terminus, the 462-residue chain is A-type ATP synthase subunit B (462 aa).

This sequence belongs to the ATPase alpha/beta chains family. In terms of assembly, has multiple subunits with at least A(3), B(3), C, D, E, F, H, I and proteolipid K(x).

Its subcellular location is the cell membrane. Its function is as follows. Component of the A-type ATP synthase that produces ATP from ADP in the presence of a proton gradient across the membrane. The B chain is a regulatory subunit. This Methanobrevibacter smithii (strain ATCC 35061 / DSM 861 / OCM 144 / PS) protein is A-type ATP synthase subunit B.